A 901-amino-acid polypeptide reads, in one-letter code: Mediator of RNA polymerase II transcription subunit 14 (901 aa).

This sequence belongs to the Mediator complex subunit 14 family. Component of the Mediator complex.

It is found in the nucleus. Component of the Mediator complex, a coactivator involved in the regulated transcription of nearly all RNA polymerase II-dependent genes. Mediator functions as a bridge to convey information from gene-specific regulatory proteins to the basal RNA polymerase II transcription machinery. Mediator is recruited to promoters by direct interactions with regulatory proteins and serves as a scaffold for the assembly of a functional preinitiation complex with RNA polymerase II and the general transcription factors. The chain is Mediator of RNA polymerase II transcription subunit 14 (RGR1) from Yarrowia lipolytica (strain CLIB 122 / E 150) (Yeast).